The primary structure comprises 2110 residues: MGAVTWLLPGIFLALFALTPEGGVLKKIIRHKRESGLNMTLPEENQPVVFNHIYNIKLPMGSQCSVDLESASGEKDLTPTPESSGSFQEHTVDGENQIVFTHRINIPRRACGCAAAPDVKELLSRLEELELLVSSLREQCTMGTGCCLQPAEGRLDTRPFCSGRGNFSAEGCGCVCEPGWKGPNCSEPDCPGNCNLRGQCLDGQCICDEGFTGEDCSQLACPNDCNDQGRCVNGVCVCFEGYAGPDCGLEVCPVPCSEEHGMCVDGRCVCKDGFAGEDCNEPLCLNNCYNRGRCVENECVCDEGFTGEDCSELICPNDCFDRGRCINGTCYCEEGFTGEDCGELTCPNDCQGRGQCEEGQCVCNEGFAGADCSEKRCPADCHHRGRCLNGQCECDDGFTGADCGDLQCPNGCSGHGRCVNGQCVCDEGYTGEDCSQRRCPNDCHNRGLCVQGKCICEQGFKGFDCSEMSCPNDCHQHGRCVNGMCICDDDYTGEDCRDRRCPRDCSQRGRCVDGQCICEDGFTGPDCAELSCPSDCHGHGRCVNGQCICHEGFTGKDCKEQRCPSDCHGQGRCEDGQCICHEGFTGLDCGQRSCPNDCSNQGQCVSGRCICNEGYTGIDCSEVSPPKDLIVTEVTEETVNLAWDNEMRVTEYLIMYTPTHADGLEMQFRVPGDQTSTTIRELEPGVEYFIRVFAILENKRSIPVSARVATYLPAPEGLKFKSIKETSVEVEWDPLDIAFETWEIIFRNMNKEDEGEITKSLRRPETSYRQTGLAPGQEYEISLHIVKNNTRGPGLKKVTTTRLDAPSHIEVKDVTDTTALITWFKPLAEIDSIELSYGIKDVPGDRTTIDLTHEDNQYSIGNLRPDTEYEVSLISRRVDMASNPAKETFITGLDAPRNLRRVSQTDNSITLEWRNVKADIDSYRIKYAPISGGDHAEIDVPKSQQATTKTTLTGLRPGTEYGIGVSAVKGDKESDPATINAATEIDAPKDLRVSETTQDSLTFFWTTPLAKFDRYRLNYSLPTGQSMEVQLPKDATSHVLTDLEPGQEYTVLLIAEKGRHKSKPARVKASTEEVPSLENLTVTEAGWDGLRLNWTADDLAYEYFVIQVQEANNVETAHNFTVPGNLRAADIPGLKVATSYRVSIYGVARGYRTPVLSAETSTGTTPNLGEVTVAEVGWDALTLNWTAPEGAYKNFFIQVLEADTTQTVQNLTVPGGLRSVDLPGLKAATRYYITLRGVTQDFGTAPLSVEVLTEDLPQLGGLSVTEVSWDGLTLNWTTDDLAYKHFVVQVQEANNVEAAQNLTVPGSLRAVDIPGLKADTPYRVSIYGVIQGYRTPMLSTDVSTAREPEIGNLNVSDVTPKSFNLSWTATDGIFDMFTIEIIDSNRLLQTAEHNISGAERTAHISGLPPSTDFIVYLSGIAPSIRTKTISTTATTEALPLLENLTISDTNPYGFTVSWTASENAFDSFLVTVVDSGKLLDPQEFTLSGTQRKLELRGLITGIGYEVLVSGFTQGHQTKPLRAETITEAEPEVDNLLVSDATPDGFRLSWTADEGIFDSFVIRIRDTKKQSEPQEISLPSPERTRDITGLREATEYEIELYGISRGRRSQPVSAIATTAMGSPKEIMFSDITENAATVSWRAPTAQVESFRITYVPMTGGAPSMVTVDGTDTETRLVKLTPGVEYRVSVIAMKGFEESDPVSGTLITALDGPSGLLIANITDSEALAMWQPAIATVDSYVISYTGERVPEVTRTVSGNTVEYELHDLEPATEYILSIFAEKGQQKSSTIATKFTTDLDSPREFTATEVQSETALLTWRPPRASVTGYLLVYESVDGTVKEVIVGPDTTSYSLADLSPSTHYSARIQALSGSLRSKLIQTIFTTIGLLYPFPRDCSQAMLNGDTTSGLYTIYINGDKTQALEVYCDMTSDGGGWIVFLRRKNGREDFYRNWKAYAAGFGDRREEFWLGLDNLSKITAQGQYELRVDLQDHGESAYAVYDRFSVGDAKSRYKLKVEGYSGTAGDSMNYHNGRSFSTYDKDTDSAITNCALSYKGAFWYKNCHRVNLMGRYGDNNHSQGVNWFHWKGHEYSIQFAEMKLRPSNFRNLEGRRKRA.

The first 22 residues, 1-22 (MGAVTWLLPGIFLALFALTPEG), serve as a signal peptide directing secretion. Residue Asn-38 is glycosylated (N-linked (GlcNAc...) asparagine). Residues Ser-65, Ser-70, and Ser-72 each carry the phosphoserine modification. The segment at 69–91 (ESASGEKDLTPTPESSGSFQEHT) is disordered. The O-linked (Xyl...) (chondroitin sulfate) serine glycan is linked to Ser-72. Polar residues predominate over residues 80-89 (TPESSGSFQE). Residues 118-142 (DVKELLSRLEELELLVSSLREQCTM) adopt a coiled-coil conformation. N-linked (GlcNAc...) asparagine glycosylation is found at Asn-166 and Asn-184. An EGF-like 1; incomplete domain is found at 174–185 (CVCEPGWKGPNC). 14 consecutive EGF-like domains span residues 186-216 (SEPD…GEDC), 217-247 (SQLA…GPDC), 248-279 (GLEV…GEDC), 280-310 (NEPL…GEDC), 311-341 (SELI…GEDC), 342-372 (GELT…GADC), 373-403 (SEKR…GADC), 404-434 (GDLQ…GEDC), 435-465 (SQRR…GFDC), 466-496 (SEMS…GEDC), 497-527 (RDRR…GPDC), 528-558 (AELS…GKDC), 559-589 (KEQR…GLDC), and 590-621 (GQRS…IDCS). 42 cysteine pairs are disulfide-bonded: Cys-190-Cys-200, Cys-194-Cys-205, Cys-207-Cys-216, Cys-221-Cys-231, Cys-225-Cys-236, Cys-238-Cys-247, Cys-252-Cys-263, Cys-256-Cys-268, Cys-270-Cys-279, Cys-284-Cys-294, Cys-288-Cys-299, Cys-301-Cys-310, Cys-315-Cys-325, Cys-319-Cys-330, Cys-332-Cys-341, Cys-346-Cys-356, Cys-350-Cys-361, Cys-363-Cys-372, Cys-377-Cys-387, Cys-381-Cys-392, Cys-394-Cys-403, Cys-408-Cys-418, Cys-412-Cys-423, Cys-425-Cys-434, Cys-439-Cys-449, Cys-443-Cys-454, Cys-456-Cys-465, Cys-470-Cys-480, Cys-474-Cys-485, Cys-487-Cys-496, Cys-501-Cys-511, Cys-505-Cys-516, Cys-518-Cys-527, Cys-532-Cys-542, Cys-536-Cys-547, Cys-549-Cys-558, Cys-563-Cys-573, Cys-567-Cys-578, Cys-580-Cys-589, Cys-594-Cys-604, Cys-598-Cys-609, and Cys-611-Cys-620. Asn-327 carries N-linked (GlcNAc...) asparagine glycosylation. 14 consecutive Fibronectin type-III domains span residues 625-715 (PPKD…LPAP), 716-804 (EGLK…TRLD), 805-894 (APSH…TGLD), 895-988 (APRN…IDAP), 989-1077 (KDLR…VPSL), 1078-1165 (ENLT…TGTT), 1167-1259 (NLGE…LPQL), 1260-1348 (GGLS…AREP), 1349-1440 (EIGN…ALPL), 1442-1530 (ENLT…EAEP), 1531-1620 (EVDN…TAMG), 1621-1710 (SPKE…ALDG), 1711-1797 (PSGL…TDLD), and 1798-1886 (SPRE…IGLL). An N-linked (GlcNAc...) asparagine glycan is attached at Asn-788. Thr-905 carries the post-translational modification Phosphothreonine. N-linked (GlcNAc...) asparagine glycans are attached at residues Asn-1018, Asn-1079, Asn-1093, Asn-1119, Asn-1184, Asn-1210, Asn-1275, Asn-1301, Asn-1354, Asn-1364, Asn-1394, and Asn-1443. A glycan (N-linked (GlcNAc...) asparagine) is linked at Asn-1718. The region spanning 1884–2099 (GLLYPFPRDC…FAEMKLRPSN (216 aa)) is the Fibrinogen C-terminal domain. Residues Asn-1969 and Asn-2071 are each glycosylated (N-linked (GlcNAc...) asparagine).

It belongs to the tenascin family. In terms of assembly, homohexamer; disulfide-linked. A homotrimer may be formed in the triple coiled-coil region and may be stabilized by disulfide rings at both ends. Two of such half-hexabrachions may be disulfide linked within the central globule. Interacts with CSPG4. Interacts (via the 3rd fibronectin type-III domain) with integrin ITGA9:ITGB1. N-glycosylated. Expressed in the corneal limbus, the periosteum and the rib molecular layer of the cerebellum, the matrix of kidney tubules, blood vessels, stomach and intestine (at protein level). As to expression, weakly expressed in the brain. In terms of tissue distribution, highly expressed in the thymus and moderately expressed in the brain.

The protein localises to the secreted. The protein resides in the extracellular space. It is found in the extracellular matrix. In terms of biological role, extracellular matrix protein implicated in guidance of migrating neurons as well as axons during development, synaptic plasticity as well as neuronal regeneration. Promotes neurite outgrowth when provided to neurons in culture. May play a role in supporting the growth of epithelial tumors. Ligand for integrins ITGA8:ITGB1, ITGA9:ITGB1, ITGAV:ITGB3 and ITGAV:ITGB6. In tumors, stimulates angiogenesis by elongation, migration and sprouting of endothelial cells. In Mus musculus (Mouse), this protein is Tenascin.